We begin with the raw amino-acid sequence, 238 residues long: Lipid transferase CIDEC (238 aa).

The tract at residues 1–35 is required for liquid-liquid phase separation (LLPS); sequence MEYAMKSLSLLYPKSLSRHVSVRTSVVTQQLLSEP. The CIDE-N domain maps to 41-118; it reads RARPCRVSTA…VLQKGQKWQP (78 aa).

This sequence belongs to the CIDE family. Homodimer. Homooligomer; undergoes liquid-liquid phase separation (LLPS) via its N-terminus, facilitating lipid droplet fusion, occurs at the lipid droplet contact sites. Interacts with CIDEA. Interacts with PLIN1. Interacts with NFAT5; this interaction is direct and retains NFAT5 in the cytoplasm. Interacts with CEBPB. Interacts with isoform CLSTN3beta of CLSTN3; inhibiting the lipid transferase activity of CIDEC. Post-translationally, ubiquitinated and targeted to proteasomal degradation, resulting in a short half-life (about 15 minutes in 3T3-L1 cells). Protein stability depends on triaclyglycerol synthesis, fatty acid availability and lipid droplet formation. As to expression, expressed mainly in adipose tissue, small intestine, heart, colon and stomach and, at lower levels, in brain, kidney and liver.

It localises to the lipid droplet. Its subcellular location is the endoplasmic reticulum. The protein resides in the nucleus. The enzyme catalyses a triacyl-sn-glycerol(in) = a triacyl-sn-glycerol(out). Functionally, lipid transferase specifically expressed in white adipose tissue, which promotes unilocular lipid droplet formation by mediating lipid droplet fusion. Lipid droplet fusion promotes their enlargement, restricting lipolysis and favoring lipid storage. Localizes on the lipid droplet surface, at focal contact sites between lipid droplets, and mediates atypical lipid droplet fusion by undergoing liquid-liquid phase separation (LLPS) and promoting directional net neutral lipid transfer from the smaller to larger lipid droplets. The transfer direction may be driven by the internal pressure difference between the contacting lipid droplet pair. Its role in neutral lipid transfer and lipid droplet enlargement is activated by the interaction with PLIN1. May also act as a CEBPB coactivator in the white adipose tissue to control the expression of a subset of CEBPB downstream target genes, including SOCS1, SOCS3, TGFB1, TGFBR1, ID2 and XDH. When overexpressed in preadipocytes, induces apoptosis or increases cell susceptibility to apoptosis induced by serum deprivation or TGFB treatment. The chain is Lipid transferase CIDEC from Homo sapiens (Human).